We begin with the raw amino-acid sequence, 566 residues long: Medium-chain fatty-acid--CoA ligase (566 aa).

231-242 (ILASERAYCARL) provides a ligand contact to ATP.

Belongs to the ATP-dependent AMP-binding enzyme family. Homodimer. Requires Mg(2+) as cofactor.

The protein localises to the cell membrane. It catalyses the reaction hexanoate + ATP + CoA = hexanoyl-CoA + AMP + diphosphate. The enzyme catalyses octanoate + ATP + CoA = octanoyl-CoA + AMP + diphosphate. It carries out the reaction dodecanoate + ATP + CoA = dodecanoyl-CoA + AMP + diphosphate. The protein operates within lipid metabolism; fatty acid beta-oxidation. Functionally, catalyzes the esterification, concomitant with transport, of exogenous fatty acids into metabolically active CoA thioesters for subsequent degradation or incorporation into phospholipids. Is maximally active on C6:0, C8:0 and C12:0 fatty acids, while has a low activity on C14-C18 chain length fatty acids. Is involved in the anaerobic beta-oxidative degradation of fatty acids, which allows anaerobic growth of E.coli on fatty acids as a sole carbon and energy source in the presence of nitrate or fumarate as a terminal electron acceptor. Can functionally replace FadD under anaerobic conditions. In Escherichia coli (strain K12), this protein is Medium-chain fatty-acid--CoA ligase.